Consider the following 141-residue polypeptide: Nucleoside diphosphate kinase (141 aa).

Residues lysine 11, phenylalanine 59, arginine 87, threonine 93, arginine 104, and asparagine 114 each coordinate ATP. Histidine 117 functions as the Pros-phosphohistidine intermediate in the catalytic mechanism.

The protein belongs to the NDK family. Homotetramer. Mg(2+) serves as cofactor.

It localises to the cytoplasm. The enzyme catalyses a 2'-deoxyribonucleoside 5'-diphosphate + ATP = a 2'-deoxyribonucleoside 5'-triphosphate + ADP. It carries out the reaction a ribonucleoside 5'-diphosphate + ATP = a ribonucleoside 5'-triphosphate + ADP. Major role in the synthesis of nucleoside triphosphates other than ATP. The ATP gamma phosphate is transferred to the NDP beta phosphate via a ping-pong mechanism, using a phosphorylated active-site intermediate. The protein is Nucleoside diphosphate kinase of Bordetella avium (strain 197N).